The sequence spans 213 residues: N-(5'-phosphoribosyl)anthranilate isomerase (213 aa).

It belongs to the TrpF family.

It carries out the reaction N-(5-phospho-beta-D-ribosyl)anthranilate = 1-(2-carboxyphenylamino)-1-deoxy-D-ribulose 5-phosphate. The protein operates within amino-acid biosynthesis; L-tryptophan biosynthesis; L-tryptophan from chorismate: step 3/5. This Methanocella arvoryzae (strain DSM 22066 / NBRC 105507 / MRE50) protein is N-(5'-phosphoribosyl)anthranilate isomerase.